The primary structure comprises 409 residues: LysM domain-containing GPI-anchored protein LYP6 (409 aa).

The N-terminal stretch at 1 to 27 (MAGWPAAEAAGALVVAILAAAAGGAAG) is a signal peptide. Disulfide bonds link Cys-34/Cys-100, Cys-40/Cys-166, Cys-98/Cys-164, and Cys-100/Cys-166. The LysM 1 domain maps to 110–160 (VRYSARPADTLASVADVVFAGLASADQIRTANGLSAEDPDAPLDAGATLVV). An N-linked (GlcNAc...) asparagine glycan is attached at Asn-168. Positions 179–222 (LSYVVRVGDTVQSIAATHATTVTDISNVNAMGSPIVAPGDILAI) constitute a LysM 2 domain. Intrachain disulfides connect Cys-227–Cys-259 and Cys-254–Cys-282. Asn-244 is a glycosylation site (N-linked (GlcNAc...) asparagine). Asn-291, Asn-302, and Asn-313 each carry an N-linked (GlcNAc...) asparagine glycan. A disordered region spans residues 353 to 387 (SPAPGAGEAGGDIPGFPGSSNVSPANGPSGSVSQA). A compositionally biased stretch (polar residues) spans 370-387 (GSSNVSPANGPSGSVSQA). A lipid anchor (GPI-anchor amidated alanine) is attached at Ala-387. The propeptide at 388 to 409 (ASVNRPHQIVALILSVALYFQM) is removed in mature form.

In terms of assembly, interacts with LYP4. Interacts with CERK1. Interacts with CEBIP. As to expression, expressed in roots and leaves.

It is found in the cell membrane. Functions in innate immunity. Functions as a pattern recognition receptor (PRR), sensing bacterial peptidoglycan (PGN) and fungal chitin at the cell surface. Involved in resistance against the bacterial pathogen Xanthomonas oryzae pv. oryzae (Xoo) and the fungal pathogen Magnaporthe oryzae. Binds PGN and fungal chitin in vitro. Involved in microbe-associated molecular patterns (MAMPs) perception and participates in the activation of defense genes against the bacterial pathogen Xanthomonas oryzae pv. oryzicola (Xoc) or the fungal pathogen Magnaporthe oryzae. The polypeptide is LysM domain-containing GPI-anchored protein LYP6 (Oryza sativa subsp. japonica (Rice)).